A 91-amino-acid polypeptide reads, in one-letter code: YcgL domain-containing protein Ent638_2370 (91 aa).

The YcgL domain maps to 1–85 (MFCVIYRSAK…PPENLLKQHL (85 aa)).

The polypeptide is YcgL domain-containing protein Ent638_2370 (Enterobacter sp. (strain 638)).